The primary structure comprises 310 residues: NADP-dependent D-sorbitol-6-phosphate dehydrogenase (310 aa).

Tyrosine 48 serves as the catalytic Proton donor. Substrate is bound at residue histidine 108. Position 210–272 (210–272 (TPLGGAAANK…SSKIQRLKEN (63 aa))) interacts with NADP(+).

Belongs to the aldo/keto reductase family.

It carries out the reaction D-sorbitol 6-phosphate + NADP(+) = aldehydo-D-glucose 6-phosphate + NADPH + H(+). In terms of biological role, synthesizes sorbitol-6-phosphate, a key intermediate in the synthesis of sorbitol which is a major photosynthetic product in many members of the Rosaceae family. This is NADP-dependent D-sorbitol-6-phosphate dehydrogenase (S6PDH) from Malus domestica (Apple).